A 475-amino-acid polypeptide reads, in one-letter code: Erythroid membrane-associated protein (475 aa).

Residues 1-29 form the signal peptide; sequence MEMASSAGSWLSGCLIPLVFLRLSVHVSG. The region spanning 30–140 is the Ig-like V-type domain; it reads HAGDAGKFHV…GNLSKEDTVI (111 aa). At 30 to 155 the chain is on the extracellular side; sequence HAGDAGKFHV…PSVGSLSPSA (126 aa). Cys50 and Cys126 form a disulfide bridge. N-linked (GlcNAc...) asparagine glycosylation occurs at Asn132. A helical membrane pass occupies residues 156-176; that stretch reads VALAVILPVLVLLIMVCLCLI. Topologically, residues 177 to 475 are cytoplasmic; it reads WKQRRAKEKL…ALQELKAPSF (299 aa). The region spanning 220-418 is the B30.2/SPRY domain; that stretch reads KLKRAAANSG…LVICSELHKS (199 aa). Ser418 carries the phosphoserine modification.

It belongs to the immunoglobulin superfamily. BTN/MOG family. Post-translationally, glycosylated. Expressed in erythroid-enriched bone marrow (at protein level). Highly expressed in bone marrow and to a lower extent in leukocytes, thymus, lymph node and spleen.

Its subcellular location is the cell membrane. It localises to the cytoplasm. Its function is as follows. Possible role as a cell-adhesion or receptor molecule of erythroid cells. The sequence is that of Erythroid membrane-associated protein (ERMAP) from Homo sapiens (Human).